We begin with the raw amino-acid sequence, 710 residues long: Early transcription factor 82 kDa subunit (710 aa).

This sequence belongs to the poxviridae VETF large subunit family. As to quaternary structure, heterodimer of a 70 kDa and a 82 kDa subunit. Part of the early transcription complex composed of ETF, RAP94/OPG109, and the DNA-directed RNA polymerase.

It localises to the virion. Acts with RNA polymerase to initiate transcription from early gene promoters. Is recruited by the RPO-associated protein of 94 kDa RAP94/OPG109 to form the early transcription complex, which also contains the core RNA polymerase. ETF heterodimer binds to early gene promoters. In Bos taurus (Bovine), this protein is Early transcription factor 82 kDa subunit (OPG133).